The sequence spans 580 residues: Mitogen-activated protein kinase 12 (580 aa).

A disordered region spans residues 18 to 38 (RTASGSNQSSNAGEEAASSDL). Residues 20 to 29 (ASGSNQSSNA) are compositionally biased toward polar residues. The region spanning 87–378 (YQIQEVIGKG…AEEALADPYF (292 aa)) is the Protein kinase domain. Residues 93 to 101 (IGKGSYGVV) and lysine 116 contribute to the ATP site. Aspartate 213 serves as the catalytic Proton acceptor. Residue threonine 249 is modified to Phosphothreonine. Residues 249–251 (TDY) carry the TXY motif. Tyrosine 251 bears the Phosphotyrosine mark. A required for kinase activity and nuclear localization region spans residues 325–506 (ARRYLSTMRK…SADSVARTTV (182 aa)). The disordered stretch occupies residues 458 to 580 (YSKGERGSPL…LSEQVSRMHS (123 aa)). The span at 502 to 543 (ARTTVSPPMSQDAQQHGSAGQNGVTSTDLSSRSYLKSASISA) shows a compositional bias: polar residues. Acidic residues predominate over residues 554–566 (EPEDDYISEEMEG).

The protein belongs to the protein kinase superfamily. CMGC Ser/Thr protein kinase family. MAP kinase subfamily. In terms of assembly, interacts with EREBP1. In terms of processing, dually phosphorylated on Thr-249 and Tyr-251, which activates the enzyme. Phosphorylated on tyrosine residue.

It localises to the cytoplasm. The protein localises to the nucleus. It catalyses the reaction L-seryl-[protein] + ATP = O-phospho-L-seryl-[protein] + ADP + H(+). It carries out the reaction L-threonyl-[protein] + ATP = O-phospho-L-threonyl-[protein] + ADP + H(+). With respect to regulation, activated by threonine and tyrosine phosphorylation. Activated in response to hydrogen peroxide, salicylic acid, jasmonic acid, ethylene, fungal elicitor and infection with rice blast fungus (M.grisea). Functionally, may be involved in defense signaling pathway. Phosphorylates EREBP1 transcriptional activator in vitro. Enhances DNA-binding activity of EREBP1 to the GCC box element of pathogenesis-related (PR) gene promoters. This is Mitogen-activated protein kinase 12 (MPK12) from Oryza sativa subsp. japonica (Rice).